Here is a 359-residue protein sequence, read N- to C-terminus: MQSTPLNFVPNAAKAPVTPGQAPDARWSREAIEALFALPFNDLLFQAQQVHRANFDANAVQLSTLLSIKTGGCPEDCSYCPQSARYDTGVEAEKLMPIDAVLEAASRAKQNGASRFCMGAAWRNPKPHQLDAVADMVRGVKAMGLETCVTLGMLKQEQAAQLKEAGLDYYNHNLDTAPEFYGEIITTRTYQDRLDTLEHVRDAGINVCCGGIVGLGESVHERAGLIAELANMEPYPDSVPINNLVKVEGTPLAGNEELDPFDFVRTIAVARITMPKAMVRLSAGREAMDDALQALCFMAGANSIFYGEKLLTTDNPEADADRKLLARLGMRVEVQDHMHHESHVGAQSSHCHIDITPAD.

The disordered stretch occupies residues 1–22 (MQSTPLNFVPNAAKAPVTPGQA). In terms of domain architecture, Radical SAM core spans 58 to 285 (NAVQLSTLLS…KAMVRLSAGR (228 aa)). Residues Cys73, Cys77, and Cys80 each contribute to the [4Fe-4S] cluster site. Positions 117, 148, 208, and 280 each coordinate [2Fe-2S] cluster.

Belongs to the radical SAM superfamily. Biotin synthase family. Homodimer. Requires [4Fe-4S] cluster as cofactor. The cofactor is [2Fe-2S] cluster.

It catalyses the reaction (4R,5S)-dethiobiotin + (sulfur carrier)-SH + 2 reduced [2Fe-2S]-[ferredoxin] + 2 S-adenosyl-L-methionine = (sulfur carrier)-H + biotin + 2 5'-deoxyadenosine + 2 L-methionine + 2 oxidized [2Fe-2S]-[ferredoxin]. Its pathway is cofactor biosynthesis; biotin biosynthesis; biotin from 7,8-diaminononanoate: step 2/2. Functionally, catalyzes the conversion of dethiobiotin (DTB) to biotin by the insertion of a sulfur atom into dethiobiotin via a radical-based mechanism. The protein is Biotin synthase of Ralstonia pickettii (strain 12J).